Consider the following 239-residue polypeptide: DNA repair protein RecO (239 aa).

The protein belongs to the RecO family.

Functionally, involved in DNA repair and RecF pathway recombination. The protein is DNA repair protein RecO of Stenotrophomonas maltophilia (strain R551-3).